A 264-amino-acid chain; its full sequence is Thymidylate synthase (264 aa).

Residues arginine 21 and 126–127 each bind dUMP; that span reads RR. Cysteine 146 (nucleophile) is an active-site residue. Residues 166 to 169, asparagine 177, and 207 to 209 each bind dUMP; these read RSAD and HLY. Aspartate 169 lines the (6R)-5,10-methylene-5,6,7,8-tetrahydrofolate pocket. Alanine 263 contributes to the (6R)-5,10-methylene-5,6,7,8-tetrahydrofolate binding site.

This sequence belongs to the thymidylate synthase family. Bacterial-type ThyA subfamily. Homodimer.

Its subcellular location is the cytoplasm. It catalyses the reaction dUMP + (6R)-5,10-methylene-5,6,7,8-tetrahydrofolate = 7,8-dihydrofolate + dTMP. It functions in the pathway pyrimidine metabolism; dTTP biosynthesis. In terms of biological role, catalyzes the reductive methylation of 2'-deoxyuridine-5'-monophosphate (dUMP) to 2'-deoxythymidine-5'-monophosphate (dTMP) while utilizing 5,10-methylenetetrahydrofolate (mTHF) as the methyl donor and reductant in the reaction, yielding dihydrofolate (DHF) as a by-product. This enzymatic reaction provides an intracellular de novo source of dTMP, an essential precursor for DNA biosynthesis. The polypeptide is Thymidylate synthase (Rhodopseudomonas palustris (strain BisB5)).